The sequence spans 214 residues: Thymidylate kinase (214 aa).

Residue 10–17 (GGEGAGKS) coordinates ATP.

Belongs to the thymidylate kinase family.

It catalyses the reaction dTMP + ATP = dTDP + ADP. Phosphorylation of dTMP to form dTDP in both de novo and salvage pathways of dTTP synthesis. The protein is Thymidylate kinase of Brucella suis biovar 1 (strain 1330).